Reading from the N-terminus, the 88-residue chain is MAERRKYGKKYCKYTEMKVDFIDYKNTELLKLSMSERGKIMPRRLTGNSKNAQEMVEKAIKRARHMALVPYIVDTKNITDSAYARSFY.

This sequence belongs to the bacterial ribosomal protein bS18 family. In terms of assembly, part of the 30S ribosomal subunit. Forms a tight heterodimer with protein bS6.

Binds as a heterodimer with protein bS6 to the central domain of the 16S rRNA, where it helps stabilize the platform of the 30S subunit. This Aliarcobacter butzleri (strain RM4018) (Arcobacter butzleri) protein is Small ribosomal subunit protein bS18.